The sequence spans 455 residues: Guanine/hypoxanthine permease GhxQ (455 aa).

Over 1 to 31 the chain is Cytoplasmic; sequence MSGDILQTPDAPKPQGALDNYFKITARGSTV. The chain crosses the membrane as a helical span at residues 32–55; it reads RQEVLAGLTTFLAMVYSVIVVPGM. Residues 56–65 lie on the Periplasmic side of the membrane; sequence LGKAGFPPAA. A helical membrane pass occupies residues 66–84; it reads VFVATCLVAGFGSLLMGLW. The Cytoplasmic portion of the chain corresponds to 85-86; that stretch reads AN. A discontinuously helical transmembrane segment spans residues 87–103; sequence LPMAIGCAISLTAFTAF. The Periplasmic portion of the chain corresponds to 104–115; it reads SLVLGQQISVPV. Residues 116-135 traverse the membrane as a helical segment; that stretch reads ALGAVFLMGVIFTAISVTGV. At 136–147 the chain is on the cytoplasmic side; it reads RTWILRNLPMGI. The chain crosses the membrane as a helical span at residues 148–168; it reads AHGTGIGIGLFLLLIAANGVG. The Periplasmic segment spans residues 169–186; sequence MVIKNPIEGLPVALGAFT. The helical transmembrane segment at 187–204 threads the bilayer; that stretch reads SFPVMMSLLGLAVIFGLE. Over 205 to 208 the chain is Cytoplasmic; it reads KCRV. Residues 209-228 form a helical membrane-spanning segment; sequence PGGILLVIIAISIIGLIFDP. The Periplasmic segment spans residues 229–260; sequence AVKYHGLVAMPSLTGEDGKSLIFSLDIMGALQ. The chain crosses the membrane as a helical span at residues 261 to 289; sequence PTVLPSVLALVMTAVFDATGTIRAVAGQA. The Cytoplasmic portion of the chain corresponds to 290 to 302; it reads NLLDKDNQIINGG. The helical transmembrane segment at 303-318 threads the bilayer; sequence KALTSDSVSSIFSGLV. The Periplasmic segment spans residues 319-320; it reads GA. A discontinuously helical membrane pass occupies residues 321 to 336; it reads APAAVYIESAAGTAAG. At 337–340 the chain is on the cytoplasmic side; it reads GKTG. A helical membrane pass occupies residues 341–355; sequence LTATVVGALFLLILF. Residues 356-366 lie on the Periplasmic side of the membrane; it reads LSPLSFLIPGY. The helical transmembrane segment at 367–386 threads the bilayer; sequence ATAPALMYVGLLMLSNVSKL. The Cytoplasmic portion of the chain corresponds to 387 to 391; it reads DFNDF. The discontinuously helical intramembrane region spans 392–427; sequence IDAMAGLVCAVFIVLTCNIVTGIMLGFVTLVVGRVF. Residues 428–455 lie on the Cytoplasmic side of the membrane; sequence AREWQKLNIGTVIITAALVAFYAGGWAI.

Belongs to the nucleobase:cation symporter-2 (NCS2) (TC 2.A.40) family. Azg-like subfamily.

The protein localises to the cell membrane. In terms of biological role, high-affinity transporter for guanine and hypoxanthine. The protein is Guanine/hypoxanthine permease GhxQ (ghxQ) of Escherichia coli (strain K12).